The chain runs to 302 residues: uncharacterized protein (302 aa).

Transmembrane regions (helical) follow at residues 1–21, 33–53, 67–87, 101–121, 124–144, 185–205, 220–240, 253–273, and 274–294; these read MSWIIFYTIIFALLVLDLGVI, SLLFSLFYFTISCLFGIYIYY, FLIEKAMSLDNIFVISIIFQF, FGIIGVIAFRAVMIYGGIILI, FSWLLYIFAVILIATGVKTFY, YVTPLFISLILIEAIDLVFAI, IIYTSNIFAILGLRALFFCLA, LALILIFIGIKIFIHHYIAIP, and AYISLTVTITLLLLGIFASVI.

The protein belongs to the TerC family.

It localises to the cell membrane. This is an uncharacterized protein from Rickettsia bellii (strain RML369-C).